Here is a 1043-residue protein sequence, read N- to C-terminus: Isoleucine--tRNA ligase (1043 aa).

A 'HIGH' region motif is present at residues 49–59 (PFATGLPHYGH). The short motif at 592–596 (KMSKR) is the 'KMSKS' region element. Lys-595 is an ATP binding site.

This sequence belongs to the class-I aminoacyl-tRNA synthetase family. IleS type 2 subfamily. Monomer. Zn(2+) serves as cofactor.

Its subcellular location is the cytoplasm. The enzyme catalyses tRNA(Ile) + L-isoleucine + ATP = L-isoleucyl-tRNA(Ile) + AMP + diphosphate. In terms of biological role, catalyzes the attachment of isoleucine to tRNA(Ile). As IleRS can inadvertently accommodate and process structurally similar amino acids such as valine, to avoid such errors it has two additional distinct tRNA(Ile)-dependent editing activities. One activity is designated as 'pretransfer' editing and involves the hydrolysis of activated Val-AMP. The other activity is designated 'posttransfer' editing and involves deacylation of mischarged Val-tRNA(Ile). This is Isoleucine--tRNA ligase from Chlamydia abortus (strain DSM 27085 / S26/3) (Chlamydophila abortus).